Here is an 843-residue protein sequence, read N- to C-terminus: Lon protease (843 aa).

Over residues 1–16 the composition is skewed to basic and acidic residues; the sequence is MRERKETAMSDKEKKG. A disordered region spans residues 1 to 22; the sequence is MRERKETAMSDKEKKGAGAGAQ. Residues 42–236 form the Lon N-terminal domain; it reads LPILPLRNSV…LVLELLNRKR (195 aa). 388 to 395 contacts ATP; it reads GPPGVGKT. The region spanning 627–808 is the Lon proteolytic domain; it reads TEIAGVATGL…DEVLQAALEE (182 aa). Active-site residues include S714 and K757. The disordered stretch occupies residues 805 to 843; it reads ALEENPVGRKPPAAPEPEGEKKPGATPTPPAKKPDEIRV.

It belongs to the peptidase S16 family. Homohexamer. Organized in a ring with a central cavity.

Its subcellular location is the cytoplasm. It catalyses the reaction Hydrolysis of proteins in presence of ATP.. In terms of biological role, ATP-dependent serine protease that mediates the selective degradation of mutant and abnormal proteins as well as certain short-lived regulatory proteins. Required for cellular homeostasis and for survival from DNA damage and developmental changes induced by stress. Degrades polypeptides processively to yield small peptide fragments that are 5 to 10 amino acids long. Binds to DNA in a double-stranded, site-specific manner. In Anaeromyxobacter dehalogenans (strain 2CP-C), this protein is Lon protease.